The following is a 242-amino-acid chain: C-reactive protein 3.3 (242 aa).

Positions 1–24 (MKTFHGPTCGTAVSLCLLLFLTSA) are cleaved as a signal peptide. Residues 30-241 (ITSKVKFPPS…GVVLSPNEIC (212 aa)) enclose the Pentraxin (PTX) domain. 2 residues coordinate phosphocholine: Thr60 and Tyr63. Disulfide bonds link Cys62/Cys125 and Cys112/Cys144. Ca(2+) contacts are provided by Asp85 and Asn86. N-linked (GlcNAc...) asparagine glycosylation is present at Asn147. Residues Gln169, Asp170, and Gln180 each contribute to the Ca(2+) site. The cysteines at positions 207 and 241 are disulfide-linked.

Belongs to the pentraxin family. In terms of assembly, homopentamer. Pentraxin (or pentaxin) have a discoid arrangement of 5 non-covalently bound subunits. Requires Ca(2+) as cofactor.

It localises to the secreted. Might serve the role of immunoglobulins. This chain is C-reactive protein 3.3, found in Limulus polyphemus (Atlantic horseshoe crab).